The following is a 231-amino-acid chain: Uridylate cyclase (231 aa).

One can recognise a Guanylate cyclase domain in the interval 46 to 178 (TVLYADLDGS…RAANYAAKLT (133 aa)). Y49 contributes to the a ribonucleoside 5'-triphosphate binding site. Mn(2+) is bound by residues D51 and D95. R96 serves as a coordination point for a ribonucleoside 5'-triphosphate.

Belongs to the adenylyl cyclase class-4/guanylyl cyclase family. Pyrimidine cyclase subfamily. As to quaternary structure, homodimer. Requires Mn(2+) as cofactor.

The protein localises to the cytoplasm. The catalysed reaction is UTP = 3',5'-cyclic UMP + diphosphate. Functionally, pycsar (pyrimidine cyclase system for antiphage resistance) provides immunity against bacteriophage. The pyrimidine cyclase (PycC) synthesizes cyclic nucleotides in response to infection; these serve as specific second messenger signals. The signal activates the adjacent effector, leading to bacterial cell death and abortive phage infection. A clade B Pycsar system. In terms of biological role, the pyrimidine cyclase gene of a two-gene Pycsar system, generates cyclic UMP (cUMP) from UTP probably in response to bacteriophage infection. Expression of this and adjacent effector XpPycTIR (AC P0DV29) confers resistance to bacteriophage T7. When cells expressing the Pycsar system are infected phage T7 at low multiplicity of infection (0.2 MOI) the culture survives, at 2.0 MOI bacteria enter growth arrest. The same cells enter growth arrest after exposure to 2.5 mM cUMP but not cCMP; the effector protein responds only to the cUMP produced by its cognate NTP cyclase. The sequence is that of Uridylate cyclase from Xanthomonas perforans.